A 455-amino-acid chain; its full sequence is Probable alpha-galactosidase B (455 aa).

The signal sequence occupies residues 1–16; that stretch reads MIEFLALITLISRANA. 2 cysteine pairs are disulfide-bonded: cysteine 39–cysteine 71 and cysteine 121–cysteine 151. N-linked (GlcNAc...) asparagine glycosylation occurs at asparagine 42. Aspartate 149 acts as the Nucleophile in catalysis. Residues asparagine 177 and asparagine 192 are each glycosylated (N-linked (GlcNAc...) asparagine). Residue 222–226 participates in substrate binding; that stretch reads NWGNA. The Proton donor role is filled by aspartate 244. Asparagine 395 is a glycosylation site (N-linked (GlcNAc...) asparagine).

This sequence belongs to the glycosyl hydrolase 27 family.

It is found in the secreted. It catalyses the reaction Hydrolysis of terminal, non-reducing alpha-D-galactose residues in alpha-D-galactosides, including galactose oligosaccharides, galactomannans and galactolipids.. Its function is as follows. Hydrolyzes a variety of simple alpha-D-galactoside as well as more complex molecules such as oligosaccharides and polysaccharides. The polypeptide is Probable alpha-galactosidase B (aglB) (Emericella nidulans (strain FGSC A4 / ATCC 38163 / CBS 112.46 / NRRL 194 / M139) (Aspergillus nidulans)).